Here is a 434-residue protein sequence, read N- to C-terminus: CinA-like protein (434 aa).

Belongs to the CinA family.

This chain is CinA-like protein, found in Mycobacterium avium (strain 104).